The sequence spans 425 residues: UPF0597 protein VIBHAR_03081 (425 aa).

Belongs to the UPF0597 family.

This chain is UPF0597 protein VIBHAR_03081, found in Vibrio campbellii (strain ATCC BAA-1116).